A 193-amino-acid polypeptide reads, in one-letter code: Large ribosomal subunit protein uL5 (193 aa).

The protein belongs to the universal ribosomal protein uL5 family. In terms of assembly, part of the 50S ribosomal subunit; part of the 5S rRNA/L5/L18/L25 subcomplex. Contacts the 5S rRNA and the P site tRNA. Forms a bridge to the 30S subunit in the 70S ribosome.

Functionally, this is one of the proteins that bind and probably mediate the attachment of the 5S RNA into the large ribosomal subunit, where it forms part of the central protuberance. In the 70S ribosome it contacts protein S13 of the 30S subunit (bridge B1b), connecting the 2 subunits; this bridge is implicated in subunit movement. Contacts the P site tRNA; the 5S rRNA and some of its associated proteins might help stabilize positioning of ribosome-bound tRNAs. This Pseudarthrobacter chlorophenolicus (strain ATCC 700700 / DSM 12829 / CIP 107037 / JCM 12360 / KCTC 9906 / NCIMB 13794 / A6) (Arthrobacter chlorophenolicus) protein is Large ribosomal subunit protein uL5.